The primary structure comprises 366 residues: Alanine racemase (366 aa).

Lys40 serves as the catalytic Proton acceptor; specific for D-alanine. N6-(pyridoxal phosphate)lysine is present on Lys40. Arg136 serves as a coordination point for substrate. The Proton acceptor; specific for L-alanine role is filled by Tyr263. Substrate is bound at residue Met310.

This sequence belongs to the alanine racemase family. The cofactor is pyridoxal 5'-phosphate.

The enzyme catalyses L-alanine = D-alanine. The protein operates within amino-acid biosynthesis; D-alanine biosynthesis; D-alanine from L-alanine: step 1/1. Its function is as follows. Catalyzes the interconversion of L-alanine and D-alanine. May also act on other amino acids. In Streptococcus equi subsp. equi (strain 4047), this protein is Alanine racemase (alr).